The chain runs to 98 residues: Alpha-elicitin DRE-alpha (98 aa).

Cystine bridges form between C3/C71, C27/C56, and C51/C95.

It belongs to the elicitin family.

The protein localises to the secreted. Induces local and distal defense responses (incompatible hypersensitive reaction) in plants from the solanaceae and cruciferae families. Elicits leaf necrosis and causes the accumulation of pathogenesis-related proteins. Might interact with the lipidic molecules of the plasma membrane. The chain is Alpha-elicitin DRE-alpha from Phytophthora drechsleri.